Here is a 327-residue protein sequence, read N- to C-terminus: Transaldolase (327 aa).

The Schiff-base intermediate with substrate role is filled by lysine 132.

Belongs to the transaldolase family. Type 1 subfamily. Homodimer.

It is found in the cytoplasm. It catalyses the reaction D-sedoheptulose 7-phosphate + D-glyceraldehyde 3-phosphate = D-erythrose 4-phosphate + beta-D-fructose 6-phosphate. It functions in the pathway carbohydrate degradation; pentose phosphate pathway; D-glyceraldehyde 3-phosphate and beta-D-fructose 6-phosphate from D-ribose 5-phosphate and D-xylulose 5-phosphate (non-oxidative stage): step 2/3. Functionally, transaldolase is important for the balance of metabolites in the pentose-phosphate pathway. This chain is Transaldolase, found in Chlamydia felis (strain Fe/C-56) (Chlamydophila felis).